The chain runs to 265 residues: 2-C-methyl-D-erythritol 4-phosphate cytidylyltransferase (265 aa).

The segment covering 231–241 has biased composition (basic and acidic residues); it reads DRGGASREAER. Residues 231–265 are disordered; sequence DRGGASREAERSAMPSAATSVFSGARSAASGSEEV. Residues 253 to 265 show a composition bias toward low complexity; that stretch reads SGARSAASGSEEV.

The protein belongs to the IspD/TarI cytidylyltransferase family. IspD subfamily.

The enzyme catalyses 2-C-methyl-D-erythritol 4-phosphate + CTP + H(+) = 4-CDP-2-C-methyl-D-erythritol + diphosphate. The protein operates within isoprenoid biosynthesis; isopentenyl diphosphate biosynthesis via DXP pathway; isopentenyl diphosphate from 1-deoxy-D-xylulose 5-phosphate: step 2/6. Catalyzes the formation of 4-diphosphocytidyl-2-C-methyl-D-erythritol from CTP and 2-C-methyl-D-erythritol 4-phosphate (MEP). This chain is 2-C-methyl-D-erythritol 4-phosphate cytidylyltransferase, found in Xanthomonas campestris pv. campestris (strain B100).